A 372-amino-acid polypeptide reads, in one-letter code: F-box/kelch-repeat protein At4g14905 (372 aa).

Residues 34–74 form the F-box domain; it reads LHDEIAVSCFARVPRCYYPAISLVCRNFRRLMASPEIYIER. 3 Kelch repeats span residues 137 to 183, 184 to 229, and 232 to 280; these read ETYV…LIDG, KLYV…FFVM, and KIYR…CMNQ.

This Arabidopsis thaliana (Mouse-ear cress) protein is F-box/kelch-repeat protein At4g14905.